We begin with the raw amino-acid sequence, 548 residues long: 2-succinyl-5-enolpyruvyl-6-hydroxy-3-cyclohexene-1-carboxylate synthase (548 aa).

Belongs to the TPP enzyme family. MenD subfamily. Homodimer. Mg(2+) is required as a cofactor. Mn(2+) serves as cofactor. Requires thiamine diphosphate as cofactor.

It catalyses the reaction isochorismate + 2-oxoglutarate + H(+) = 5-enolpyruvoyl-6-hydroxy-2-succinyl-cyclohex-3-ene-1-carboxylate + CO2. It participates in quinol/quinone metabolism; 1,4-dihydroxy-2-naphthoate biosynthesis; 1,4-dihydroxy-2-naphthoate from chorismate: step 2/7. Its pathway is quinol/quinone metabolism; menaquinone biosynthesis. In terms of biological role, catalyzes the thiamine diphosphate-dependent decarboxylation of 2-oxoglutarate and the subsequent addition of the resulting succinic semialdehyde-thiamine pyrophosphate anion to isochorismate to yield 2-succinyl-5-enolpyruvyl-6-hydroxy-3-cyclohexene-1-carboxylate (SEPHCHC). This Mycobacterium marinum (strain ATCC BAA-535 / M) protein is 2-succinyl-5-enolpyruvyl-6-hydroxy-3-cyclohexene-1-carboxylate synthase.